A 380-amino-acid chain; its full sequence is Putative glutamate--cysteine ligase 2-2 (380 aa).

The protein belongs to the glutamate--cysteine ligase type 2 family. YbdK subfamily.

It carries out the reaction L-cysteine + L-glutamate + ATP = gamma-L-glutamyl-L-cysteine + ADP + phosphate + H(+). ATP-dependent carboxylate-amine ligase which exhibits weak glutamate--cysteine ligase activity. The protein is Putative glutamate--cysteine ligase 2-2 of Nocardia farcinica (strain IFM 10152).